We begin with the raw amino-acid sequence, 207 residues long: Large ribosomal subunit protein uL4 (207 aa).

The interval 44-71 (RRQGTQSAKTRAEVRGGGRKPWKQKGTG) is disordered. Residues 60 to 71 (GGRKPWKQKGTG) are compositionally biased toward basic residues.

The protein belongs to the universal ribosomal protein uL4 family. In terms of assembly, part of the 50S ribosomal subunit.

Its function is as follows. One of the primary rRNA binding proteins, this protein initially binds near the 5'-end of the 23S rRNA. It is important during the early stages of 50S assembly. It makes multiple contacts with different domains of the 23S rRNA in the assembled 50S subunit and ribosome. Forms part of the polypeptide exit tunnel. The sequence is that of Large ribosomal subunit protein uL4 from Alkaliphilus oremlandii (strain OhILAs) (Clostridium oremlandii (strain OhILAs)).